Consider the following 102-residue polypeptide: Large ribosomal subunit protein bL21 (102 aa).

Belongs to the bacterial ribosomal protein bL21 family. In terms of assembly, part of the 50S ribosomal subunit. Contacts protein L20.

In terms of biological role, this protein binds to 23S rRNA in the presence of protein L20. The sequence is that of Large ribosomal subunit protein bL21 from Bacillus cytotoxicus (strain DSM 22905 / CIP 110041 / 391-98 / NVH 391-98).